The sequence spans 29 residues: Cuticle protein 36 (29 aa).

In terms of biological role, component of the cuticle of migratory locust which contains more than 100 different structural proteins. The protein is Cuticle protein 36 of Locusta migratoria (Migratory locust).